Here is a 269-residue protein sequence, read N- to C-terminus: 2-dehydro-3-deoxyphosphooctonate aldolase (269 aa).

This sequence belongs to the KdsA family.

The protein localises to the cytoplasm. The catalysed reaction is D-arabinose 5-phosphate + phosphoenolpyruvate + H2O = 3-deoxy-alpha-D-manno-2-octulosonate-8-phosphate + phosphate. It functions in the pathway carbohydrate biosynthesis; 3-deoxy-D-manno-octulosonate biosynthesis; 3-deoxy-D-manno-octulosonate from D-ribulose 5-phosphate: step 2/3. Its pathway is bacterial outer membrane biogenesis; lipopolysaccharide biosynthesis. This chain is 2-dehydro-3-deoxyphosphooctonate aldolase, found in Chlamydia caviae (strain ATCC VR-813 / DSM 19441 / 03DC25 / GPIC) (Chlamydophila caviae).